A 400-amino-acid polypeptide reads, in one-letter code: Probable cysteine protease atg4 (400 aa).

Catalysis depends on C131, which acts as the Nucleophile. Catalysis depends on residues D305 and H307.

It belongs to the peptidase C54 family.

The protein localises to the cytoplasm. It is found in the nucleus. It localises to the preautophagosomal structure. It carries out the reaction [protein]-C-terminal L-amino acid-glycyl-phosphatidylethanolamide + H2O = [protein]-C-terminal L-amino acid-glycine + a 1,2-diacyl-sn-glycero-3-phosphoethanolamine. In terms of biological role, cysteine protease that plays a key role in cytoplasm to vacuole transport (Cvt) and autophagy by mediating both proteolytic activation and delipidation of ATG8. Required for selective autophagic degradation of the nucleus (nucleophagy) as well as for mitophagy which contributes to regulate mitochondrial quantity and quality by eliminating the mitochondria to a basal level to fulfill cellular energy requirements and preventing excess ROS production. The protease activity is required for proteolytic activation of ATG8: cleaves the C-terminal amino acid of ATG8 to reveal a C-terminal glycine. ATG8 ubiquitin-like activity requires the exposure of the glycine at the C-terminus for its conjugation to phosphatidylethanolamine (PE) and its insertion to membranes, which is necessary for autophagy. The ATG8-PE conjugate mediates tethering between adjacent membranes and stimulates membrane hemifusion, leading to expansion of the autophagosomal membrane during autophagy. In addition to the protease activity, also catalyzes deconjugation of PE-conjugated forms of ATG8 during macroautophagy: ATG8 delipidation is required to release the protein from membranes, which facilitates multiple events during macroautophagy, and especially for efficient autophagosome biogenesis, the assembly of ATG9-containing tubulovesicular clusters into phagophores/autophagosomes, and for the disassembly of PAS-associated ATG components. ATG8 delipidation by ATG4 also recycles ATG8-PE generated on inappropriate membranes to maintain a reservoir of unlipidated ATG8 that is required for autophagosome formation at the PAS. The polypeptide is Probable cysteine protease atg4 (atg4) (Aspergillus clavatus (strain ATCC 1007 / CBS 513.65 / DSM 816 / NCTC 3887 / NRRL 1 / QM 1276 / 107)).